The chain runs to 376 residues: Chaperone protein DnaJ (376 aa).

Positions 5–70 (DYYEILGVSK…QKRAAYDQYG (66 aa)) constitute a J domain. The CR-type zinc-finger motif lies at 131–209 (GVTKEIRIPT…CHGHGRVERS (79 aa)). Residues Cys-144, Cys-147, Cys-161, Cys-164, Cys-183, Cys-186, Cys-197, and Cys-200 each contribute to the Zn(2+) site. 4 CXXCXGXG motif repeats span residues 144–151 (CDVCHGSG), 161–168 (CPTCHGSG), 183–190 (CPHCQGRG), and 197–204 (CNKCHGHG).

This sequence belongs to the DnaJ family. Homodimer. Zn(2+) is required as a cofactor.

The protein localises to the cytoplasm. Participates actively in the response to hyperosmotic and heat shock by preventing the aggregation of stress-denatured proteins and by disaggregating proteins, also in an autonomous, DnaK-independent fashion. Unfolded proteins bind initially to DnaJ; upon interaction with the DnaJ-bound protein, DnaK hydrolyzes its bound ATP, resulting in the formation of a stable complex. GrpE releases ADP from DnaK; ATP binding to DnaK triggers the release of the substrate protein, thus completing the reaction cycle. Several rounds of ATP-dependent interactions between DnaJ, DnaK and GrpE are required for fully efficient folding. Also involved, together with DnaK and GrpE, in the DNA replication of plasmids through activation of initiation proteins. This Shigella boydii serotype 18 (strain CDC 3083-94 / BS512) protein is Chaperone protein DnaJ.